The primary structure comprises 582 residues: Potassium-transporting ATPase potassium-binding subunit (582 aa).

11 helical membrane-spanning segments follow: residues 6–26 (LVQL…LGLY), 65–85 (IYAL…YVLE), 87–107 (LQGG…FVAV), 136–156 (GLAV…VALI), 178–198 (VLYI…WQGV), 277–297 (LEML…GVMI), 304–324 (LAIL…TLAA), 402–422 (GLYG…LMVG), 441–461 (ALVI…AAVI), 505–525 (IAGA…VLAL), and 546–566 (GGIF…LTFV).

It belongs to the KdpA family. In terms of assembly, the system is composed of three essential subunits: KdpA, KdpB and KdpC.

It is found in the cell inner membrane. In terms of biological role, part of the high-affinity ATP-driven potassium transport (or Kdp) system, which catalyzes the hydrolysis of ATP coupled with the electrogenic transport of potassium into the cytoplasm. This subunit binds the periplasmic potassium ions and delivers the ions to the membrane domain of KdpB through an intramembrane tunnel. This Solidesulfovibrio magneticus (strain ATCC 700980 / DSM 13731 / RS-1) (Desulfovibrio magneticus) protein is Potassium-transporting ATPase potassium-binding subunit.